We begin with the raw amino-acid sequence, 517 residues long: Fluconazole resistance protein 1 (517 aa).

The segment at residues 26–52 (CDSCRIKKTKCDGKKPCNRCTLDNKIC) is a DNA-binding region (zn(2)-C6 fungal-type). Disordered regions lie at residues 106-137 (KSVD…QNST), 250-270 (SAQF…QQQQ), 284-307 (SDIE…PPTS), and 378-403 (GSIQ…VSSF). A compositionally biased stretch (low complexity) spans 113–124 (SSPASSTPNSSS). The segment covering 250–260 (SAQFSKGTFSP) has biased composition (polar residues). Residues 261 to 270 (QQQQLQQQQQ) show a composition bias toward low complexity. Over residues 298 to 307 (NSGSVSPPTS) the composition is skewed to polar residues. Positions 388–398 (GSVHKPVRNHS) are enriched in basic residues.

It is found in the nucleus. In terms of biological role, transcription factor that acts as a negative regulator of fluconazole resistance in C.albicans. Also confers fluconazole resistance in S.cerevisiae by activation of the PDR5 gene. The protein is Fluconazole resistance protein 1 (FCR1) of Candida albicans (Yeast).